A 37-amino-acid polypeptide reads, in one-letter code: Large ribosomal subunit protein bL36 (37 aa).

Belongs to the bacterial ribosomal protein bL36 family.

The protein is Large ribosomal subunit protein bL36 of Trichodesmium erythraeum (strain IMS101).